We begin with the raw amino-acid sequence, 410 residues long: UDP-N-acetylglucosamine--dolichyl-phosphate N-acetylglucosaminephosphotransferase (410 aa).

Over 1–10 the chain is Lumenal; the sequence is MWAFPELPLP. Residues 11-40 form a helical membrane-spanning segment; it reads LPLLVNLIGSLLGFVATVTLIPAFRSHFIA. Residues 41–60 lie on the Cytoplasmic side of the membrane; that stretch reads ARLCGQDLNKLSQQQIPESQ. Residues 46–48 and glutamate 58 each bind UDP-N-acetyl-alpha-D-glucosamine; that span reads QDL. The helical transmembrane segment at 61–80 threads the bilayer; sequence GVISGAVFLIILFCFIPFPF. Residues 81–93 lie on the Lumenal side of the membrane; the sequence is LNCFVEEQCKAFP. Residues 94–120 form a helical membrane-spanning segment; sequence HHEFVALIGALLAICCMIFLGFADDVL. The Cytoplasmic portion of the chain corresponds to 121 to 123; the sequence is NLR. Residues 124-145 traverse the membrane as a helical segment; the sequence is WRHKLLLPTAASLPLLMVYFTN. Lysine 127 contributes to the dolichyl phosphate binding site. Topologically, residues 146-168 are lumenal; the sequence is FGNTTIVVPKPFRWILGLHLDLG. Asparagine 148 carries N-linked (GlcNAc...) asparagine glycosylation. Residues 169–188 form a helical membrane-spanning segment; that stretch reads ILYYVYMGLLAVFCTNAINI. Position 180–188 (180–188) interacts with dolichyl phosphate; that stretch reads VFCTNAINI. Mg(2+) is bound at residue asparagine 187. The Cytoplasmic segment spans residues 189–194; the sequence is LAGING. Position 193 (asparagine 193) interacts with UDP-N-acetyl-alpha-D-glucosamine. The chain crosses the membrane as a helical span at residues 195-215; the sequence is LEAGQSLVISASIIVFNLVEL. The Lumenal segment spans residues 216–220; it reads EGDYR. The helical transmembrane segment at 221 to 244 threads the bilayer; that stretch reads DDHIFSLYFMIPFFFTTLGLLYHN. At 245-252 the chain is on the cytoplasmic side; it reads WYPSRVFV. The chain crosses the membrane as a helical span at residues 253-271; it reads GDTFCYFAGMTFAVVGILG. A Mg(2+)-binding site is contributed by aspartate 254. At 272–273 the chain is on the lumenal side; the sequence is HF. Residues 274–295 traverse the membrane as a helical segment; sequence SKTMLLFFMPQVFNFLYSLPQL. Over 296-377 the chain is Cytoplasmic; sequence FHIIPCPRHR…LLLKVFGPIH (82 aa). 303 to 305 contributes to the UDP-N-acetyl-alpha-D-glucosamine binding site; that stretch reads RHR. A helical transmembrane segment spans residues 378-402; it reads ERNLTLLLLLLQVLSSAATFSIRYQ. At 403–410 the chain is on the lumenal side; it reads LVRLFYDV.

Belongs to the glycosyltransferase 4 family. As to quaternary structure, homodimer. It depends on Mg(2+) as a cofactor.

It is found in the endoplasmic reticulum membrane. The catalysed reaction is a di-trans,poly-cis-dolichyl phosphate + UDP-N-acetyl-alpha-D-glucosamine = an N-acetyl-alpha-D-glucosaminyl-diphospho-di-trans,poly-cis-dolichol + UMP. It functions in the pathway protein modification; protein glycosylation. Inhibited by natural nucleoside antibiotic tunicamycin, which acts as a structural analog and competitor of UDP-GlcNAc. Functionally, UDP-N-acetylglucosamine--dolichyl-phosphate N-acetylglucosaminephosphotransferase that operates in the biosynthetic pathway of dolichol-linked oligosaccharides, the glycan precursors employed in protein asparagine (N)-glycosylation. The assembly of dolichol-linked oligosaccharides begins on the cytosolic side of the endoplasmic reticulum membrane and finishes in its lumen. The sequential addition of sugars to dolichol pyrophosphate produces dolichol-linked oligosaccharides containing fourteen sugars, including two GlcNAcs, nine mannoses and three glucoses. Once assembled, the oligosaccharide is transferred from the lipid to nascent proteins by oligosaccharyltransferases. Catalyzes the initial step of dolichol-linked oligosaccharide biosynthesis, transfering GlcNAc-1-P from cytosolic UDP-GlcNAc onto the carrier lipid dolichyl phosphate (P-dolichol), yielding GlcNAc-P-P-dolichol embedded in the cytoplasmic leaflet of the endoplasmic reticulum membrane. The sequence is that of UDP-N-acetylglucosamine--dolichyl-phosphate N-acetylglucosaminephosphotransferase from Mus musculus (Mouse).